Here is a 453-residue protein sequence, read N- to C-terminus: Ribosomal protein uS12 methylthiotransferase RimO (453 aa).

The MTTase N-terminal domain occupies 6 to 116; the sequence is PTVGIVSLGC…VLTAVHEAIA (111 aa). 6 residues coordinate [4Fe-4S] cluster: Cys-15, Cys-51, Cys-80, Cys-148, Cys-152, and Cys-155. The region spanning 134–371 is the Radical SAM core domain; it reads LTPKHFAYLK…MQLQQQISAN (238 aa). Positions 374-440 constitute a TRAM domain; it reads QAKIGKTIQV…EYDLWATPVG (67 aa).

Belongs to the methylthiotransferase family. RimO subfamily. It depends on [4Fe-4S] cluster as a cofactor.

Its subcellular location is the cytoplasm. The catalysed reaction is L-aspartate(89)-[ribosomal protein uS12]-hydrogen + (sulfur carrier)-SH + AH2 + 2 S-adenosyl-L-methionine = 3-methylsulfanyl-L-aspartate(89)-[ribosomal protein uS12]-hydrogen + (sulfur carrier)-H + 5'-deoxyadenosine + L-methionine + A + S-adenosyl-L-homocysteine + 2 H(+). Functionally, catalyzes the methylthiolation of an aspartic acid residue of ribosomal protein uS12. The chain is Ribosomal protein uS12 methylthiotransferase RimO from Hydrogenovibrio crunogenus (strain DSM 25203 / XCL-2) (Thiomicrospira crunogena).